The chain runs to 312 residues: Homoserine O-succinyltransferase (312 aa).

Cysteine 142 serves as the catalytic Acyl-thioester intermediate. Positions 163 and 192 each coordinate substrate. The active-site Proton acceptor is the histidine 235. Residue glutamate 237 is part of the active site. Arginine 249 contacts substrate.

It belongs to the MetA family.

It localises to the cytoplasm. It carries out the reaction L-homoserine + succinyl-CoA = O-succinyl-L-homoserine + CoA. Its pathway is amino-acid biosynthesis; L-methionine biosynthesis via de novo pathway; O-succinyl-L-homoserine from L-homoserine: step 1/1. Transfers a succinyl group from succinyl-CoA to L-homoserine, forming succinyl-L-homoserine. This Alteromonas mediterranea (strain DSM 17117 / CIP 110805 / LMG 28347 / Deep ecotype) protein is Homoserine O-succinyltransferase.